A 380-amino-acid chain; its full sequence is Glutamyl-tRNA reductase 1 (380 aa).

Residues 42-45 (TCNR), S93, 98-100 (ETD), and Q104 each bind substrate. C43 acts as the Nucleophile in catalysis. Residue 172 to 177 (GAGAVG) coordinates NADP(+).

It belongs to the glutamyl-tRNA reductase family. As to quaternary structure, homodimer.

The catalysed reaction is (S)-4-amino-5-oxopentanoate + tRNA(Glu) + NADP(+) = L-glutamyl-tRNA(Glu) + NADPH + H(+). Its pathway is porphyrin-containing compound metabolism; protoporphyrin-IX biosynthesis; 5-aminolevulinate from L-glutamyl-tRNA(Glu): step 1/2. Its function is as follows. Catalyzes the NADPH-dependent reduction of glutamyl-tRNA(Glu) to glutamate 1-semialdehyde (GSA). This chain is Glutamyl-tRNA reductase 1, found in Pyrobaculum calidifontis (strain DSM 21063 / JCM 11548 / VA1).